The sequence spans 418 residues: Serine hydroxymethyltransferase (418 aa).

(6S)-5,6,7,8-tetrahydrofolate-binding positions include L121 and 125-127 (GHL). Residue K230 is modified to N6-(pyridoxal phosphate)lysine. A (6S)-5,6,7,8-tetrahydrofolate-binding site is contributed by 355-357 (SPF).

It belongs to the SHMT family. Homodimer. Pyridoxal 5'-phosphate is required as a cofactor.

It is found in the cytoplasm. The enzyme catalyses (6R)-5,10-methylene-5,6,7,8-tetrahydrofolate + glycine + H2O = (6S)-5,6,7,8-tetrahydrofolate + L-serine. It participates in one-carbon metabolism; tetrahydrofolate interconversion. The protein operates within amino-acid biosynthesis; glycine biosynthesis; glycine from L-serine: step 1/1. In terms of biological role, catalyzes the reversible interconversion of serine and glycine with tetrahydrofolate (THF) serving as the one-carbon carrier. This reaction serves as the major source of one-carbon groups required for the biosynthesis of purines, thymidylate, methionine, and other important biomolecules. Also exhibits THF-independent aldolase activity toward beta-hydroxyamino acids, producing glycine and aldehydes, via a retro-aldol mechanism. The chain is Serine hydroxymethyltransferase from Streptococcus agalactiae serotype III (strain NEM316).